Consider the following 732-residue polypeptide: Translation initiation factor eIF2B subunit epsilon (732 aa).

The 168-residue stretch at 559-726 (GEEEEDFGVE…QEADEEDSDE (168 aa)) folds into the W2 domain.

This sequence belongs to the eIF-2B gamma/epsilon subunits family. In terms of assembly, component of the translation initiation factor 2B (eIF2B) complex which is a heterodecamer of two sets of five different subunits: alpha, beta, gamma, delta and epsilon. Subunits alpha, beta and delta comprise a regulatory subcomplex and subunits epsilon and gamma comprise a catalytic subcomplex. Within the complex, the hexameric regulatory complex resides at the center, with the two heterodimeric catalytic subcomplexes bound on opposite sides.

The protein resides in the cytoplasm. It localises to the cytosol. Functionally, acts as a component of the translation initiation factor 2B (eIF2B) complex, which catalyzes the exchange of GDP for GTP on the eukaryotic initiation factor 2 (eIF2) complex gamma subunit. Its guanine nucleotide exchange factor activity is repressed when bound to eIF2 complex phosphorylated on the alpha subunit, thereby limiting the amount of methionyl-initiator methionine tRNA available to the ribosome and consequently global translation is repressed. The polypeptide is Translation initiation factor eIF2B subunit epsilon (GCD6) (Candida albicans (strain SC5314 / ATCC MYA-2876) (Yeast)).